The sequence spans 487 residues: Serine/threonine-protein kinase BSK8 (487 aa).

Residue glycine 2 is the site of N-myristoyl glycine attachment. A Phosphoserine modification is found at serine 20. The Protein kinase domain maps to 59 to 325; it reads ENIVSEHGER…DLEIASHQLL (267 aa). Residues 65 to 73, asparagine 71, lysine 87, and 133 to 135 each bind ATP; these read HGERAPNVV and EFM. Catalysis depends on aspartate 181, which acts as the Proton acceptor. ATP-binding positions include 185-186 and asparagine 205; that span reads YR. Serine 213 is subject to Phosphoserine.

It belongs to the protein kinase superfamily. Ser/Thr protein kinase family. As to quaternary structure, interacts with ASK7/BIN2, BSK1, BSK5, BSK6 and BSK11. Interacts with BSL2. In terms of processing, phosphorylated by BRI1, ASK7/BIN2 and ASK9/BIL2.

The protein resides in the cell membrane. The catalysed reaction is L-seryl-[protein] + ATP = O-phospho-L-seryl-[protein] + ADP + H(+). It catalyses the reaction L-threonyl-[protein] + ATP = O-phospho-L-threonyl-[protein] + ADP + H(+). In terms of biological role, probable serine/threonine kinase that acts as a positive regulator of brassinosteroid (BR) signaling downstream of the receptor kinase BRI1. Functions redundantly with BSK3, BSK4, BSK6 and BSK7. Involved in the regulation of sucrose-phosphate synthase 1 (SPS1) in the context of sucrose resuply after starvation. Activates BSL2, a phosphatase that may dephosphorylate SPS1, leading to the activation of SPS1. This chain is Serine/threonine-protein kinase BSK8, found in Arabidopsis thaliana (Mouse-ear cress).